Here is a 565-residue protein sequence, read N- to C-terminus: NAD-dependent malic enzyme (565 aa).

The Proton donor role is filled by Tyr104. Residue Arg157 coordinates NAD(+). The active-site Proton acceptor is the Lys175. Residues Glu246, Asp247, and Asp270 each coordinate a divalent metal cation. The NAD(+) site is built by Asp270 and Asn418.

Belongs to the malic enzymes family. Homotetramer. Mg(2+) serves as cofactor. The cofactor is Mn(2+).

It carries out the reaction (S)-malate + NAD(+) = pyruvate + CO2 + NADH. It catalyses the reaction oxaloacetate + H(+) = pyruvate + CO2. In Enterobacter sp. (strain 638), this protein is NAD-dependent malic enzyme.